The primary structure comprises 664 residues: Putative peroxisomal acyl-coenzyme A oxidase 1.2 (664 aa).

399–404 (CGGHGY) provides a ligand contact to FAD. The Microbody targeting signal motif lies at 662-664 (AKL).

It belongs to the acyl-CoA oxidase family. FAD serves as cofactor.

Its subcellular location is the peroxisome. It carries out the reaction a 2,3-saturated acyl-CoA + O2 = a (2E)-enoyl-CoA + H2O2. Its function is as follows. Catalyzes the desaturation of acyl-CoAs to 2-trans-enoyl-CoAs. This is Putative peroxisomal acyl-coenzyme A oxidase 1.2 (ACX1.2) from Arabidopsis thaliana (Mouse-ear cress).